The sequence spans 158 residues: Large ribosomal subunit protein uL30 (158 aa).

This sequence belongs to the universal ribosomal protein uL30 family. As to quaternary structure, part of the 50S ribosomal subunit.

This chain is Large ribosomal subunit protein uL30, found in Saccharolobus islandicus (strain Y.G.57.14 / Yellowstone #1) (Sulfolobus islandicus).